The primary structure comprises 164 residues: Low molecular weight phosphotyrosine protein phosphatase 2 (164 aa).

Residue C14 is the Nucleophile of the active site. Residue R20 is part of the active site. D130 serves as the catalytic Proton donor.

Belongs to the low molecular weight phosphotyrosine protein phosphatase family. In terms of tissue distribution, cone cells and primary pigment cells in developing pupal retina.

It localises to the cytoplasm. The catalysed reaction is O-phospho-L-tyrosyl-[protein] + H2O = L-tyrosyl-[protein] + phosphate. The enzyme catalyses a phosphate monoester + H2O = an alcohol + phosphate. Functionally, catalyzes the dephosphorylation of tyrosine phosphorylated proteins and low-MW aryl phosphates. Can contribute to the regulation of a variety of developmental processes. In Drosophila melanogaster (Fruit fly), this protein is Low molecular weight phosphotyrosine protein phosphatase 2 (primo-2).